A 110-amino-acid chain; its full sequence is Putative anti-sigma factor antagonist TM_1442 (110 aa).

The STAS domain maps to 4 to 110 (LKLDIVEQDD…FKITDTVEEA (107 aa)). At Ser-59 the chain carries Phosphoserine.

Belongs to the anti-sigma-factor antagonist family. In terms of processing, phosphorylated on a serine residue.

In terms of biological role, in the phosphorylated form it could act as an anti-anti-sigma factor that counteracts an anti-sigma factor and thus releases a sigma factor from inhibition. This chain is Putative anti-sigma factor antagonist TM_1442, found in Thermotoga maritima (strain ATCC 43589 / DSM 3109 / JCM 10099 / NBRC 100826 / MSB8).